Here is a 164-residue protein sequence, read N- to C-terminus: Thiol peroxidase (164 aa).

Residues 16–162 (LQVGDIAKDF…YEAAINAAKI (147 aa)) form the Thioredoxin domain. The active-site Cysteine sulfenic acid (-SOH) intermediate is Cys58. A disulfide bridge links Cys58 with Cys92.

It belongs to the peroxiredoxin family. Tpx subfamily. Homodimer.

The catalysed reaction is a hydroperoxide + [thioredoxin]-dithiol = an alcohol + [thioredoxin]-disulfide + H2O. Functionally, thiol-specific peroxidase that catalyzes the reduction of hydrogen peroxide and organic hydroperoxides to water and alcohols, respectively. Plays a role in cell protection against oxidative stress by detoxifying peroxides. This is Thiol peroxidase from Streptococcus agalactiae serotype V (strain ATCC BAA-611 / 2603 V/R).